The chain runs to 263 residues: Tryptophan synthase alpha chain (263 aa).

Catalysis depends on proton acceptor residues glutamate 50 and aspartate 61.

This sequence belongs to the TrpA family. As to quaternary structure, tetramer of two alpha and two beta chains.

It catalyses the reaction (1S,2R)-1-C-(indol-3-yl)glycerol 3-phosphate + L-serine = D-glyceraldehyde 3-phosphate + L-tryptophan + H2O. Its pathway is amino-acid biosynthesis; L-tryptophan biosynthesis; L-tryptophan from chorismate: step 5/5. The alpha subunit is responsible for the aldol cleavage of indoleglycerol phosphate to indole and glyceraldehyde 3-phosphate. This chain is Tryptophan synthase alpha chain, found in Clostridium acetobutylicum (strain ATCC 824 / DSM 792 / JCM 1419 / IAM 19013 / LMG 5710 / NBRC 13948 / NRRL B-527 / VKM B-1787 / 2291 / W).